We begin with the raw amino-acid sequence, 310 residues long: MSDVNAVKHFLLSLQKDICQQLAAIDGGADFAEDEWQRAEGGGGCSRVLSGGRVFERAGVNFSHVTGKSLPPSASTHRPDLAGRSFQAMGVSLVIHPLSPYIPTSHANVRLFIAEKPGEEPVWWFGGGFDLTPYYGFKEDAVHWHQTAHDLCQPFGDEVYPRYKKWCDDYFFLKHRNEARGIGGLFFDDLNEPDFATSFAFIRAVGNGFLDGYLPIVERRKDLPWGEREREFQLYRRGRYVEFNLIWDRGTLFGLQSGGRTESILMSMPPLARWEYQHQPEPGSPEALLYQDFLPARDWLAESHTHNKEA.

Serine 92 serves as a coordination point for substrate. A divalent metal cation is bound by residues histidine 96 and histidine 106. Histidine 106 functions as the Proton donor in the catalytic mechanism. 108 to 110 (NVR) is a binding site for substrate. Positions 145 and 175 each coordinate a divalent metal cation. The tract at residues 240-275 (YVEFNLIWDRGTLFGLQSGGRTESILMSMPPLARWE) is important for dimerization. 258-260 (GGR) lines the substrate pocket.

The protein belongs to the aerobic coproporphyrinogen-III oxidase family. Homodimer. It depends on a divalent metal cation as a cofactor.

It localises to the cytoplasm. It catalyses the reaction coproporphyrinogen III + O2 + 2 H(+) = protoporphyrinogen IX + 2 CO2 + 2 H2O. Its pathway is porphyrin-containing compound metabolism; protoporphyrin-IX biosynthesis; protoporphyrinogen-IX from coproporphyrinogen-III (O2 route): step 1/1. Functionally, involved in the heme biosynthesis. Catalyzes the aerobic oxidative decarboxylation of propionate groups of rings A and B of coproporphyrinogen-III to yield the vinyl groups in protoporphyrinogen-IX. This is Oxygen-dependent coproporphyrinogen-III oxidase from Pectobacterium carotovorum subsp. carotovorum (strain PC1).